The following is a 594-amino-acid chain: Segmentation polarity homeobox protein engrailed (594 aa).

Disordered regions lie at residues 1 to 64 (MALE…TRDE), 76 to 127 (IKQE…PASI), 141 to 164 (KATAEQQQQPHPQPPAIREPISPG), 198 to 217 (HYYQPSPSHPQPIVPQPQRA), 231 to 299 (ISKS…PTGS), 387 to 458 (AGTG…GSEN), and 474 to 501 (DRPSSGPRYRRTKQPKEKGDSEEKRPRT). The span at 22 to 60 (SQSPTSTTTVTMATASPVPACTTTTTTTSTSGASAASSP) shows a compositional bias: low complexity. Basic residues predominate over residues 92–112 (PHHHQHPHHHQLPHHPHHQHH). A compositionally biased stretch (pro residues) spans 151–164 (HPQPPAIREPISPG). Residues 237 to 247 (LCSSNGSSSAT) are compositionally biased toward polar residues. Low complexity-rich tracts occupy residues 278 to 299 (ASPSSASSAMTTPVTTSSPTGS) and 387 to 402 (AGTGSLNGSGSAANGA). Composition is skewed to polar residues over residues 426 to 436 (SSETNGSSSQD) and 448 to 458 (ETSSTKDGSEN). The span at 487–499 (QPKEKGDSEEKRP) shows a compositional bias: basic and acidic residues. The segment at residues 496–555 (EKRPRTAFSNAQLQRLKNEFNENRYLTEKRRQTLSAELGLNEAQIKIWFQNKRAKIKKSS) is a DNA-binding region (homeobox).

The protein belongs to the engrailed homeobox family.

It localises to the nucleus. This protein specifies the body segmentation pattern. It is required for the development of the central nervous system. Transcriptional regulator that repress activated promoters. This is Segmentation polarity homeobox protein engrailed (en) from Anopheles gambiae (African malaria mosquito).